A 141-amino-acid chain; its full sequence is Large ribosomal subunit protein uL11 (141 aa).

Belongs to the universal ribosomal protein uL11 family. As to quaternary structure, part of the ribosomal stalk of the 50S ribosomal subunit. Interacts with L10 and the large rRNA to form the base of the stalk. L10 forms an elongated spine to which L12 dimers bind in a sequential fashion forming a multimeric L10(L12)X complex. Post-translationally, one or more lysine residues are methylated.

In terms of biological role, forms part of the ribosomal stalk which helps the ribosome interact with GTP-bound translation factors. The sequence is that of Large ribosomal subunit protein uL11 from Thermotoga petrophila (strain ATCC BAA-488 / DSM 13995 / JCM 10881 / RKU-1).